Consider the following 556-residue polypeptide: Arginine--tRNA ligase (556 aa).

Positions A132–H142 match the 'HIGH' region motif.

It belongs to the class-I aminoacyl-tRNA synthetase family. As to quaternary structure, monomer.

The protein localises to the cytoplasm. The catalysed reaction is tRNA(Arg) + L-arginine + ATP = L-arginyl-tRNA(Arg) + AMP + diphosphate. In Listeria monocytogenes serotype 4a (strain HCC23), this protein is Arginine--tRNA ligase.